The chain runs to 101 residues: MPKRKVSSAEGAAKEEPKRRSARLSAKPAPAKVETKPKKAAGKDKSSDKKVQTKGKRGAKGKQAEVANQETKEDLPAENGETKNEESPASDEAEEKEAKSD.

A disordered region spans residues 1-101 (MPKRKVSSAE…EAEEKEAKSD (101 aa)). Serine 7 is modified (ADP-ribosylserine). Residue serine 8 is modified to Phosphoserine. Position 14 is an N6-acetyllysine (lysine 14). Residue serine 21 is modified to Phosphoserine. An ADP-ribosylserine; alternate modification is found at serine 25. Serine 25 carries the post-translational modification Phosphoserine; alternate. The residue at position 27 (lysine 27) is an N6-acetyllysine. Composition is skewed to basic and acidic residues over residues 33 to 51 (VETKPKKAAGKDKSSDKKV) and 70 to 86 (ETKEDLPAENGETKNEE). A Phosphothreonine modification is found at threonine 82. An N6-acetyllysine modification is found at lysine 83. Serine 87, serine 90, and serine 100 each carry phosphoserine.

This sequence belongs to the HMGN family. Interacts with transcriptional regulator SEHBP. Phosphorylation on Ser-21 and Ser-25 weakens binding to nucleosomes and increases the rate of H3 phosphorylation.

The protein localises to the nucleus. Functionally, binds to the inner side of the nucleosomal DNA thus altering the interaction between the DNA and the histone octamer. May be involved in the process which maintains transcribable genes in a unique chromatin conformation. Inhibits the phosphorylation of nucleosomal histones H3 and H2A by RPS6KA5/MSK1 and RPS6KA3/RSK2. The protein is Non-histone chromosomal protein HMG-14 (HMGN1) of Bos taurus (Bovine).